We begin with the raw amino-acid sequence, 438 residues long: Na(+)/H(+) antiporter NhaA (438 aa).

The next 11 helical transmembrane spans lie at Phe23 to Leu43, Phe62 to Leu82, Ser104 to Leu124, Gly133 to Gly153, Val162 to Phe182, Thr185 to Leu205, Ser212 to Ile232, Phe302 to Val322, Leu337 to Ile357, Trp372 to Ile392, and Ile410 to Leu430.

It belongs to the NhaA Na(+)/H(+) (TC 2.A.33) antiporter family.

The protein resides in the cell inner membrane. The catalysed reaction is Na(+)(in) + 2 H(+)(out) = Na(+)(out) + 2 H(+)(in). Na(+)/H(+) antiporter that extrudes sodium in exchange for external protons. The protein is Na(+)/H(+) antiporter NhaA of Helicobacter pylori (strain G27).